The primary structure comprises 124 residues: Orexigenic neuropeptide QRFP (124 aa).

An N-terminal signal peptide occupies residues 1–17 (MRGFRPLLSLLLPLSAC). The propeptide occupies 18–79 (FPLLDRRGPT…REHTGFRLGR (62 aa)). Positions 63 to 101 (REQQASHREHTGFRLGRQDGSSEAAGFLPADSEKASGPL) are disordered. Phenylalanine 122 carries the post-translational modification Phenylalanine amide.

It belongs to the RFamide neuropeptide family. As to quaternary structure, ligand for the G-protein coupled receptor QRFPR/GPR103. In terms of tissue distribution, expressed in the brain with highest levels in the periventricular hypothalamic nucleus and lateral hypothalamic areas. Expressed at moderate levels in the adrenal gland, eye, heart, intestine, liver, lung, kidney, mesenteric lymph node, ovary, placenta, Peyer patches, skin, spleen, stomach, testis, thymus and uterus.

It localises to the secreted. Stimulates feeding and grooming behavior, metabolic rate and locomotor activity and increases blood pressure. May have orexigenic activity. May promote aldosterone secretion by the adrenal gland. The polypeptide is Orexigenic neuropeptide QRFP (Mus musculus (Mouse)).